The primary structure comprises 188 residues: Inosine triphosphate pyrophosphatase (188 aa).

9 to 14 (TGNAKK) contributes to the ITP binding site. Glutamate 39 is a binding site for Mg(2+). ITP is bound by residues lysine 51, 67 to 68 (DT), lysine 84, 143 to 146 (FGWD), lysine 166, and 171 to 172 (HR).

Belongs to the HAM1 NTPase family. In terms of assembly, homodimer. It depends on Mg(2+) as a cofactor. Mn(2+) serves as cofactor.

Its subcellular location is the cytoplasm. It carries out the reaction ITP + H2O = IMP + diphosphate + H(+). The catalysed reaction is dITP + H2O = dIMP + diphosphate + H(+). It catalyses the reaction XTP + H2O = XMP + diphosphate + H(+). Pyrophosphatase that hydrolyzes non-canonical purine nucleotides such as inosine triphosphate (ITP), deoxyinosine triphosphate (dITP) or xanthosine 5'-triphosphate (XTP) to their respective monophosphate derivatives. The enzyme does not distinguish between the deoxy- and ribose forms. Probably excludes non-canonical purines from RNA and DNA precursor pools, thus preventing their incorporation into RNA and DNA and avoiding chromosomal lesions. In Anopheles gambiae (African malaria mosquito), this protein is Inosine triphosphate pyrophosphatase.